The chain runs to 92 residues: Large ribosomal subunit protein bL27 (92 aa).

The propeptide occupies 1 to 9 (MIKANLQLF).

This sequence belongs to the bacterial ribosomal protein bL27 family. In terms of processing, the N-terminus is cleaved by ribosomal processing cysteine protease Prp.

This chain is Large ribosomal subunit protein bL27, found in Acetivibrio thermocellus (strain ATCC 27405 / DSM 1237 / JCM 9322 / NBRC 103400 / NCIMB 10682 / NRRL B-4536 / VPI 7372) (Clostridium thermocellum).